The following is a 701-amino-acid chain: Acetyl-coenzyme A synthetase, cytoplasmic (701 aa).

The span at 1–26 (MGLPEERRKSGSGSRAREETGAEGRV) shows a compositional bias: basic and acidic residues. Residues 1–37 (MGLPEERRKSGSGSRAREETGAEGRVRGWSPPPEVRR) are disordered. The interval 1–107 (MGLPEERRKS…GATTNICYNV (107 aa)) is interaction with TFEB. S30 carries the phosphoserine modification. 219-222 (RGEK) contacts CoA. Phosphoserine occurs at positions 263, 265, and 267. Residue T363 participates in CoA binding. K418 is subject to N6-acetyllysine. Residues 439–441 (GEP), 463–468 (DTFWQT), D552, and R567 each bind ATP. CoA contacts are provided by S575 and R636. The Nuclear localization signal signature appears at 656-668 (KTRSGKIMRRVLR). Residue S659 is modified to Phosphoserine; by AMPK. K661 is subject to N6-acetyllysine.

This sequence belongs to the ATP-dependent AMP-binding enzyme family. Monomer. Interacts with TFEB. AMPK-mediated phosphorylated form at Ser-659 interacts with KPNA1; this interaction results in nuclear translocation of ACSS2. Interacts with the 'Thr-172' phosphorylated form of PRKAA2. Interacts with CREBBP. Reversibly acetylated at Lys-661. The acetyl-CoA synthase activity is inhibited by acetylation and activated by deacetylation mediated by the deacetylases SIRT1 and SIRT3. Expressed in the hippocampus.

It localises to the cytoplasm. The protein localises to the cytosol. The protein resides in the nucleus. The enzyme catalyses acetate + ATP + CoA = acetyl-CoA + AMP + diphosphate. It carries out the reaction propanoate + ATP + CoA = propanoyl-CoA + AMP + diphosphate. Its activity is regulated as follows. Inhibited by acetylation at Lys-661 and activated by deacetylation mediated by the deacetylases SIRT1 and SIRT3. Functionally, catalyzes the synthesis of acetyl-CoA from short-chain fatty acids. Acetate is the preferred substrate but can also utilize propionate with a much lower affinity. Nuclear ACSS2 promotes glucose deprivation-induced lysosomal biogenesis and autophagy, tumor cell survival and brain tumorigenesis. Glucose deprivation results in AMPK-mediated phosphorylation of ACSS2 leading to its translocation to the nucleus where it binds to TFEB and locally produces acetyl-CoA for histone acetylation in the promoter regions of TFEB target genes thereby activating their transcription. The regulation of genes associated with autophagy and lysosomal activity through ACSS2 is important for brain tumorigenesis and tumor survival. Acts as a chromatin-bound transcriptional coactivator that up-regulates histone acetylation and expression of neuronal genes. Can be recruited to the loci of memory-related neuronal genes to maintain a local acetyl-CoA pool, providing the substrate for histone acetylation and promoting the expression of specific genes, which is essential for maintaining long-term spatial memory. The protein is Acetyl-coenzyme A synthetase, cytoplasmic (Acss2) of Mus musculus (Mouse).